Reading from the N-terminus, the 379-residue chain is MSTTGQIIRCKAAVAWEAGKPLVIEEVEVAPPQKHEVRIKILFTSLCHTDVYFWEAKGQTPLFPRIFGHEAGGIVESVGEGVTDLQPGDHVLPIFTGECGECRHCHSEESNMCDLLRINTERGGMIHDGESRFSINGKPIYHFLGTSTFSEYTVVHSGQVAKINPDAPLDKVCIVSCGLSTGLGATLNVAKPKKGQSVAIFGLGAVGLGAAEGARIAGASRIIGVDFNSKRFDQAKEFGVTECVNPKDHDKPIQQVIAEMTDGGVDRSVECTGSVQAMIQAFECVHDGWGVAVLVGVPSKDDAFKTHPMNFLNERTLKGTFFGNYKPKTDIPGVVEKYMNKELELEKFITHTVPFSEINKAFDYMLKGESIRCIITMGA.

S2 is modified (N-acetylserine). C47 lines the Zn(2+) pocket. Position 49 (T49) interacts with an alcohol. NAD(+) is bound at residue T49. 8 residues coordinate Zn(2+): D50, H69, E70, C99, C102, C105, C113, and C177. Residue H69 participates in an alcohol binding. NAD(+) contacts are provided by V206 and D226. S229 is subject to Phosphoserine. NAD(+)-binding residues include R231, T272, V295, V297, T320, F322, and R372.

Belongs to the zinc-containing alcohol dehydrogenase family. Class-P subfamily. As to quaternary structure, homodimer. Requires Zn(2+) as cofactor. Glutathionylated. Root specific. Also detected in etiolated seedlings and leaves in cold conditions.

It is found in the cytoplasm. It carries out the reaction a primary alcohol + NAD(+) = an aldehyde + NADH + H(+). The enzyme catalyses a secondary alcohol + NAD(+) = a ketone + NADH + H(+). The catalysed reaction is ethanol + NAD(+) = acetaldehyde + NADH + H(+). Alcohol dehydrogenase activity show inverse correlation with the decreasing availability of oxygen. Slightly repressed by thiol-modifying agents N-ethylmaleimide (NEM) and 5,5-dithio-bis-(2-nitrobenzoic acid) (DTNB), as well as by methyl methanethiosulfonate (MMTS) in a dose-dependent manner. Inhibited by hydrogen peroxide H(2)O(2). In terms of biological role, alcohol dehydrogenase catalyzing the reduction of toxic aldehydes to the corresponding alcohols. Mostly active on ethanol (EtOH), but exhibits broad substrate selectivity for primary and secondary alcohols (e.g. cinnamyl alcohol, octanol, geraniol, butanol, propyl alcohol, pentanol, isopentanol, ethylene glycol, isopropanol, methanol and tertiary butyl alcohol). Also catalyzes the reverse reaction to convert allyl alcohol to highly toxic acryl-aldehyde. Required for survival and acclimation in hypoxic conditions, especially in roots. Not able to catalyze NADH-dependent degradation of S-nitrosoglutathione (GSNO). The polypeptide is Alcohol dehydrogenase class-P (Arabidopsis thaliana (Mouse-ear cress)).